The chain runs to 548 residues: MAAAPQQSVHPSLPSSTSTLRLLISSSPRRPPPPPPRARRYNRLAASASAAREMPWPHVLTVAGSDSGGGAGIQADIKACAALGAYCSSVVTAVTAQNTAGVQGIHVVPEEFIREQLNSVLSDMSVDVVKTGMLPSIGVVRVLCESLKKFPVKALVVDPVMVSTSGDTLSESSTLSVYRDELFAMADIVTPNVKEASRLLGGVSLRTVSDMRNAAESIYKFGPKHVLVKGGDMLESSDATDVFFDGKEFIELHAHRIKTHNTHGTGCTLASCIASELAKGATMLHAVQVAKNFVESALHHSKDLVVGNGPQGPFDHLFKLKCPPYNVGSQPSFKPDQLFLYAVTDSGMNKKWGRSIKEAVQAAIEGGATIVQLREKDSETREFLEAAKACMEICKSSGVPLLINDRVDIALACNADGVHVGQLDMSAHEVRELLGPGKIIGVSCKTPAQAQQAWNDGADYIGCGGVFPTSTKANNPTLGFDGLKTVCLASKLPVVAIGGINASNAGSVMELGLPNLKGVAVVSALFDRPSVVAETRNMKSILTNTSRT.

The span at Met1–His10 shows a compositional bias: polar residues. Residues Met1–Arg40 are disordered. Residues Met1 to Ser47 constitute a chloroplast transit peptide. The span at Pro11–Pro28 shows a compositional bias: low complexity. 4-amino-2-methyl-5-(diphosphooxymethyl)pyrimidine is bound by residues Gln372–Lys376 and Asn404. Positions 405 and 424 each coordinate Mg(2+). Ser443 provides a ligand contact to 4-amino-2-methyl-5-(diphosphooxymethyl)pyrimidine. Thr469–Thr471 lines the 2-[(2R,5Z)-2-carboxy-4-methylthiazol-5(2H)-ylidene]ethyl phosphate pocket. A 4-amino-2-methyl-5-(diphosphooxymethyl)pyrimidine-binding site is contributed by Lys472. Residues Gly499 and Val522–Ser523 contribute to the 2-[(2R,5Z)-2-carboxy-4-methylthiazol-5(2H)-ylidene]ethyl phosphate site.

The protein belongs to the thiamine-phosphate synthase family. The cofactor is Mg(2+).

Its subcellular location is the plastid. It is found in the chloroplast. It carries out the reaction 2-[(2R,5Z)-2-carboxy-4-methylthiazol-5(2H)-ylidene]ethyl phosphate + 4-amino-2-methyl-5-(diphosphooxymethyl)pyrimidine + 2 H(+) = thiamine phosphate + CO2 + diphosphate. The catalysed reaction is 2-(2-carboxy-4-methylthiazol-5-yl)ethyl phosphate + 4-amino-2-methyl-5-(diphosphooxymethyl)pyrimidine + 2 H(+) = thiamine phosphate + CO2 + diphosphate. The enzyme catalyses 4-methyl-5-(2-phosphooxyethyl)-thiazole + 4-amino-2-methyl-5-(diphosphooxymethyl)pyrimidine + H(+) = thiamine phosphate + diphosphate. It catalyses the reaction 4-amino-5-hydroxymethyl-2-methylpyrimidine + ATP = 4-amino-2-methyl-5-(phosphooxymethyl)pyrimidine + ADP + H(+). It functions in the pathway cofactor biosynthesis; thiamine diphosphate biosynthesis; thiamine phosphate from 4-amino-2-methyl-5-diphosphomethylpyrimidine and 4-methyl-5-(2-phosphoethyl)-thiazole: step 1/1. Its pathway is cofactor biosynthesis; thiamine diphosphate biosynthesis; 4-amino-2-methyl-5-diphosphomethylpyrimidine from 5-amino-1-(5-phospho-D-ribosyl)imidazole: step 2/3. In terms of biological role, essential for thiamine biosynthesis. Bifunctional enzyme that catalyzes the phosphorylation of hydroxymethylpyrimidine phosphate (HMP-P) to HMP-PP and condenses 4-methyl-5-(beta-hydroxyethyl)thiazole monophosphate (THZ-P) and 2-methyl-4-amino-5-hydroxymethyl pyrimidine pyrophosphate (HMP-PP) to form thiamine monophosphate (TMP). The protein is Probable thiamine biosynthetic bifunctional enzyme, chloroplastic of Oryza sativa subsp. japonica (Rice).